The following is a 298-amino-acid chain: Isochorismatase domain-containing protein 1 (298 aa).

Residue tyrosine 160 is modified to Phosphotyrosine. Residue lysine 279 is modified to N6-succinyllysine.

Belongs to the isochorismatase family.

The protein is Isochorismatase domain-containing protein 1 (ISOC1) of Bos taurus (Bovine).